A 2353-amino-acid chain; its full sequence is Otogelin-like protein (2353 aa).

The first 31 residues, 1-31, serve as a signal peptide directing secretion; that stretch reads MNIVRKLNLMIPWSIFLLHVLLFSLQEYICA. A VWFD 1 domain is found at 121–297; it reads GICKTWGQYH…VQTPDDTKCV (177 aa). 2 cysteine pairs are disulfide-bonded: Cys123–Cys257 and Cys145–Cys296. Residue Asn144 is glycosylated (N-linked (GlcNAc...) asparagine). Residues 390-443 enclose the TIL 1 domain; sequence CDDSFVHRDCISCCPPTCTFEKQCLGSNLHCLDGCYCPDGLVMDNGTCISLENC. N-linked (GlcNAc...) asparagine glycosylation is found at Asn434 and Asn473. The VWFD 2 domain maps to 481–654; sequence VQCSVVGDSH…NAWRVSSTCF (174 aa). 3 disulfides stabilise this stretch: Cys483–Cys618, Cys505–Cys653, and Cys527–Cys535. Residues 745–800 enclose the TIL 2 domain; the sequence is CQKGMLYHHCSSFCLHSCISLSSPEQCSDDCAEGCNCPEGKFYEDTLNFCVPIFHC. 2 N-linked (GlcNAc...) asparagine glycosylation sites follow: Asn826 and Asn876. The 170-residue stretch at 946-1115 folds into the VWFD 3 domain; that stretch reads AVCTIYGDRH…SWALGQCESP (170 aa). Intrachain disulfides connect Cys948–Cys1078 and Cys992–Cys999. Asn1289, Asn1604, and Asn2198 each carry an N-linked (GlcNAc...) asparagine glycan. In terms of domain architecture, VWFD 4 spans 1534-1723; the sequence is CRCSMLSELS…SWEIEKSFEV (190 aa). An intrachain disulfide couples Cys1536 to Cys1683. 4 disulfide bridges follow: Cys2261-Cys2317, Cys2282-Cys2331, Cys2293-Cys2348, and Cys2297-Cys2350. The region spanning 2261-2353 is the CTCK domain; it reads CKREERICQK…EPIDCTCQWN (93 aa).

This sequence belongs to the otogelin family. As to expression, expressed at high levels in fetal inner ear and heart. Low levels in fetal skeletal muscle, kidney, spleen and colon. Not detected in fetal liver, lung, brain, nor in fetal stomach. In adult tissues, highest levels in brain, kidney, heart and retina. Relatively low levels in lung, spleen and duodenum. Not detected in adult skeletal muscle, liver, nor testis.

The protein resides in the secreted. This is Otogelin-like protein (OTOGL) from Homo sapiens (Human).